Reading from the N-terminus, the 257-residue chain is MLILVSPAKTLDFEQPPLTQTHTRPDFLAYSQELIQVCQRLTPSDIATLMKVSDNIAGLNAARFGEWTPDYSIANAKQAIFAFRGDVYTGVDADTLTPEQLERTQSQLRILSGLYGLLRPLDLILPYRLEMGTALANPKGKNLYDFWGNILTEAVNRAVAEQGDELIINLASNEYFKAVKPKQLTGQLITPVFKDFKNGQYKVISFFAKKARGMMARYIIDQQVSSIDELKAFDVAGYYYSEELSKPNEPTFLREAQ.

It belongs to the UPF0246 family.

The protein is UPF0246 protein Shewmr4_2963 of Shewanella sp. (strain MR-4).